We begin with the raw amino-acid sequence, 816 residues long: Nicotine 6-hydroxylase large subunit (816 aa).

Residue glutamate 745 participates in Mo-molybdopterin cytosine dinucleotide binding.

This sequence belongs to the xanthine dehydrogenase family. As to quaternary structure, heterotrimer composed of a large subunit (NdhL), a medium subunit (NdhM) and a small subunit (NdhS). It depends on Mo-molybdopterin cytosine dinucleotide as a cofactor.

Its subcellular location is the cytoplasm. It catalyses the reaction (R)-nicotine + A + H2O = (R)-6-hydroxynicotine + AH2. It carries out the reaction (S)-nicotine + A + H2O = (S)-6-hydroxynicotine + AH2. It functions in the pathway alkaloid degradation; nicotine degradation; 6-hydroxypseudooxynicotine from nicotine (R-isomer route): step 1/2. It participates in alkaloid degradation; nicotine degradation; 6-hydroxypseudooxynicotine from nicotine (S-isomer route): step 1/2. With respect to regulation, nicotine dehydrogenase activity is inhibited by tungsten. Its function is as follows. Component of the nicotine 6-hydroxylase, which is involved in the degradation of nicotine. Catalyzes the hydroxylation of the pyridine ring at C6 to form 6-hydroxynicotine. Can use both L-nicotine and D-nicotine. The chain is Nicotine 6-hydroxylase large subunit from Paenarthrobacter nicotinovorans (Arthrobacter nicotinovorans).